Reading from the N-terminus, the 130-residue chain is Small ribosomal subunit protein uS9 (130 aa).

The tract at residues Arg-106 to Arg-130 is disordered. The segment covering Val-111–Arg-130 has biased composition (basic residues).

This sequence belongs to the universal ribosomal protein uS9 family.

The chain is Small ribosomal subunit protein uS9 from Streptococcus pneumoniae (strain ATCC 700669 / Spain 23F-1).